The chain runs to 61 residues: Photosystem II reaction center X protein (61 aa).

The chain crosses the membrane as a helical span at residues isoleucine 26–phenylalanine 46.

This sequence belongs to the PsbX family. Type 2 subfamily. PSII consists of a core antenna complex that captures photons, and an electron transfer chain that converts photonic excitation into a charge separation. PSII forms dimeric complexes.

It localises to the cellular thylakoid membrane. Involved in the binding and/or turnover of quinones at the Q(B) site of Photosystem II. The polypeptide is Photosystem II reaction center X protein (Prochlorococcus marinus (strain MIT 9312)).